The primary structure comprises 412 residues: Heme chaperone HemW (412 aa).

In terms of domain architecture, Radical SAM core spans 4 to 241 (GTYLMPTAAY…RHGQEVLTQA (238 aa)). Tyr-13 contacts S-adenosyl-L-methionine. 3 residues coordinate [2Fe-2S] cluster: Cys-19, Cys-23, and Cys-26. S-adenosyl-L-methionine contacts are provided by residues Gly-72, 73-74 (GT), Glu-105, Gln-132, Arg-144, and Asp-169.

Belongs to the anaerobic coproporphyrinogen-III oxidase family. HemW subfamily. It depends on [4Fe-4S] cluster as a cofactor.

It is found in the cytoplasm. In terms of biological role, probably acts as a heme chaperone, transferring heme to an unknown acceptor. Binds one molecule of heme per monomer, possibly covalently. Binds 1 [2Fe-2S] cluster. Although this protein has sequence motifs typically found in proteins binding the [4Fe-4S]-AdoMet radical-SAM cluster and S-adenosylmethionine, spectroscopic evidence suggests that a [2Fe-2S] cluster is present; S-adenosylmethionine was not detected. Has no detectable coproporphyrinogen-III oxidase activity. The chain is Heme chaperone HemW from Synechocystis sp. (strain ATCC 27184 / PCC 6803 / Kazusa).